A 96-amino-acid chain; its full sequence is Aspartyl/glutamyl-tRNA(Asn/Gln) amidotransferase subunit C (96 aa).

This sequence belongs to the GatC family. Heterotrimer of A, B and C subunits.

It carries out the reaction L-glutamyl-tRNA(Gln) + L-glutamine + ATP + H2O = L-glutaminyl-tRNA(Gln) + L-glutamate + ADP + phosphate + H(+). It catalyses the reaction L-aspartyl-tRNA(Asn) + L-glutamine + ATP + H2O = L-asparaginyl-tRNA(Asn) + L-glutamate + ADP + phosphate + 2 H(+). Allows the formation of correctly charged Asn-tRNA(Asn) or Gln-tRNA(Gln) through the transamidation of misacylated Asp-tRNA(Asn) or Glu-tRNA(Gln) in organisms which lack either or both of asparaginyl-tRNA or glutaminyl-tRNA synthetases. The reaction takes place in the presence of glutamine and ATP through an activated phospho-Asp-tRNA(Asn) or phospho-Glu-tRNA(Gln). This is Aspartyl/glutamyl-tRNA(Asn/Gln) amidotransferase subunit C from Fusobacterium nucleatum subsp. nucleatum (strain ATCC 25586 / DSM 15643 / BCRC 10681 / CIP 101130 / JCM 8532 / KCTC 2640 / LMG 13131 / VPI 4355).